We begin with the raw amino-acid sequence, 466 residues long: Histidine--tRNA ligase (466 aa).

This sequence belongs to the class-II aminoacyl-tRNA synthetase family. As to quaternary structure, homodimer.

The protein localises to the cytoplasm. It catalyses the reaction tRNA(His) + L-histidine + ATP = L-histidyl-tRNA(His) + AMP + diphosphate + H(+). The chain is Histidine--tRNA ligase from Xylella fastidiosa (strain M12).